A 1090-amino-acid chain; its full sequence is Solute carrier family 38 member 10 (1090 aa).

10 consecutive transmembrane segments (helical) span residues 9 to 31 (WGLI…PFCF), 36 to 58 (IVLG…MFLV), 84 to 104 (LVET…YVVI), 123 to 143 (TVRV…LSLQ), 153 to 173 (FSAM…LSSL), 229 to 249 (IFAS…FFGY), 272 to 292 (MIRV…ILPC), 323 to 343 (VLTL…PNVE), 345 to 365 (ILGF…PALI), and 378 to 398 (VVLW…LSVT). Position 441 is a phosphoserine (Ser441). 6 stretches are compositionally biased toward basic and acidic residues: residues 441–454 (SQEK…KEVL), 493–508 (EAHR…KVVV), 517–528 (PEEKKPPPRLPD), 544–560 (ESEK…EGKR), 587–596 (PRKEDSRPGN), and 607–623 (DSVE…REPA). Disordered stretches follow at residues 441–675 (SQEK…AGSK), 729–831 (EIRQ…IDLR), and 857–1037 (KAAP…ELAP). A phosphoserine mark is found at Ser608 and Ser636. Composition is skewed to basic and acidic residues over residues 654-665 (EAAEQREKKEAE), 729-744 (EIRQ…KPKP), and 758-767 (GQEEEAEHAG). At Thr769 the chain carries Phosphothreonine. The residue at position 887 (Ser887) is a Phosphoserine. Positions 923–936 (RQSGPTKAPVQTQA) are enriched in polar residues. 3 stretches are compositionally biased toward basic and acidic residues: residues 954-973 (PEVR…EQHK), 1004-1013 (ENAKPNRDLK), and 1026-1037 (DLASHPEQELAP).

It belongs to the amino acid/polyamine transporter 2 family. In terms of tissue distribution, expressed in neurons, astrocytes and epithelial cells scattered throughout the central nervous system structures including striatum, ependyma, cerebral cortex, hippocampus, hypothalamus, thalamus, pons, and cerebellum (at protein level). Highly expressed in paraventricular hypothalamic nucleus, suprachiasmatic nucleus, anterior hypothalamic area central part, in lateral ventricule and in dorsal 3rd ventricule (at protein level). Expressed in choroid plexus epithelial cells (at protein level).

The protein resides in the membrane. The enzyme catalyses L-glutamate(out) = L-glutamate(in). It catalyses the reaction L-glutamine(out) = L-glutamine(in). The catalysed reaction is L-alanine(in) = L-alanine(out). It carries out the reaction L-serine(in) = L-serine(out). The enzyme catalyses L-leucine(in) = L-leucine(out). Facilitates bidirectional transport of amino acids. May act as a glutamate sensor that regulates glutamate-glutamine cycle and mTOR signaling in the brain. The transport mechanism remains to be elucidated. This is Solute carrier family 38 member 10 from Mus musculus (Mouse).